A 287-amino-acid chain; its full sequence is Probable endonuclease 4 (287 aa).

Positions 69, 109, 144, 178, 181, 215, 228, 230, and 260 each coordinate Zn(2+).

Belongs to the AP endonuclease 2 family. The cofactor is Zn(2+).

The catalysed reaction is Endonucleolytic cleavage to 5'-phosphooligonucleotide end-products.. In terms of biological role, endonuclease IV plays a role in DNA repair. It cleaves phosphodiester bonds at apurinic or apyrimidinic (AP) sites, generating a 3'-hydroxyl group and a 5'-terminal sugar phosphate. The chain is Probable endonuclease 4 from Thermotoga petrophila (strain ATCC BAA-488 / DSM 13995 / JCM 10881 / RKU-1).